The primary structure comprises 88 residues: Small ribosomal subunit protein bS18B (88 aa).

Belongs to the bacterial ribosomal protein bS18 family. Part of the 30S ribosomal subunit. Forms a tight heterodimer with protein bS6.

Its function is as follows. Binds as a heterodimer with protein bS6 to the central domain of the 16S rRNA, where it helps stabilize the platform of the 30S subunit. The chain is Small ribosomal subunit protein bS18B (rpsR2) from Mycobacterium bovis (strain ATCC BAA-935 / AF2122/97).